A 345-amino-acid chain; its full sequence is S-adenosylmethionine:tRNA ribosyltransferase-isomerase (345 aa).

Belongs to the QueA family. In terms of assembly, monomer.

It is found in the cytoplasm. The enzyme catalyses 7-aminomethyl-7-carbaguanosine(34) in tRNA + S-adenosyl-L-methionine = epoxyqueuosine(34) in tRNA + adenine + L-methionine + 2 H(+). Its pathway is tRNA modification; tRNA-queuosine biosynthesis. In terms of biological role, transfers and isomerizes the ribose moiety from AdoMet to the 7-aminomethyl group of 7-deazaguanine (preQ1-tRNA) to give epoxyqueuosine (oQ-tRNA). The protein is S-adenosylmethionine:tRNA ribosyltransferase-isomerase of Thermus thermophilus (strain ATCC BAA-163 / DSM 7039 / HB27).